Here is a 218-residue protein sequence, read N- to C-terminus: NAD(P)H-quinone oxidoreductase subunit I (218 aa).

2 consecutive 4Fe-4S ferredoxin-type domains span residues 55–84 (GRIH…VDWV) and 95–124 (RNYS…MTEE). [4Fe-4S] cluster-binding residues include Cys-64, Cys-67, Cys-70, Cys-74, Cys-104, Cys-107, Cys-110, and Cys-114. The interval 192–218 (LSLQQDSLQGDEGESLQDAPDQDQPKG) is disordered.

The protein belongs to the complex I 23 kDa subunit family. In terms of assembly, NDH-1 is composed of at least 11 different subunits. [4Fe-4S] cluster is required as a cofactor.

The protein localises to the cellular thylakoid membrane. The catalysed reaction is a plastoquinone + NADH + (n+1) H(+)(in) = a plastoquinol + NAD(+) + n H(+)(out). It catalyses the reaction a plastoquinone + NADPH + (n+1) H(+)(in) = a plastoquinol + NADP(+) + n H(+)(out). Functionally, NDH-1 shuttles electrons from an unknown electron donor, via FMN and iron-sulfur (Fe-S) centers, to quinones in the respiratory and/or the photosynthetic chain. The immediate electron acceptor for the enzyme in this species is believed to be plastoquinone. Couples the redox reaction to proton translocation, and thus conserves the redox energy in a proton gradient. The protein is NAD(P)H-quinone oxidoreductase subunit I of Prochlorococcus marinus (strain MIT 9303).